Reading from the N-terminus, the 104-residue chain is MNKTVAVFFAVICVICVIKSCKTLKVSDLKEPESYKEAMKMAEKDPPSTRDLAKNIVKANRENCMPNCALVPTCHILSPECCPVKKPICYDLDIVKEAMKKQQG.

The N-terminal stretch at 1–23 is a signal peptide; sequence MNKTVAVFFAVICVICVIKSCKT.

It belongs to the scoloptoxin-10 family. Contains 3 disulfide bonds. Expressed by the venom gland.

It is found in the secreted. The sequence is that of U-scoloptoxin(10)-Cw1a from Cormocephalus westwoodi (Westwood's green centipede).